A 134-amino-acid polypeptide reads, in one-letter code: Cytochrome b (134 aa).

3 helical membrane passes run phenylalanine 33–methionine 53, tryptophan 77–valine 98, and tryptophan 113–leucine 133. Heme b contacts are provided by histidine 83 and histidine 97.

This sequence belongs to the cytochrome b family. As to quaternary structure, the cytochrome bc1 complex contains 11 subunits: 3 respiratory subunits (MT-CYB, CYC1 and UQCRFS1), 2 core proteins (UQCRC1 and UQCRC2) and 6 low-molecular weight proteins (UQCRH/QCR6, UQCRB/QCR7, UQCRQ/QCR8, UQCR10/QCR9, UQCR11/QCR10 and a cleavage product of UQCRFS1). This cytochrome bc1 complex then forms a dimer. Heme b serves as cofactor.

It localises to the mitochondrion inner membrane. In terms of biological role, component of the ubiquinol-cytochrome c reductase complex (complex III or cytochrome b-c1 complex) that is part of the mitochondrial respiratory chain. The b-c1 complex mediates electron transfer from ubiquinol to cytochrome c. Contributes to the generation of a proton gradient across the mitochondrial membrane that is then used for ATP synthesis. The sequence is that of Cytochrome b (MT-CYB) from Chiroderma salvini (Salvin's big-eyed bat).